Reading from the N-terminus, the 365-residue chain is Probable secreted beta-glucosidase UTH1 (365 aa).

An N-terminal signal peptide occupies residues 1–17 (MKLSALLALSASTAVLA).

It belongs to the SUN family.

Its subcellular location is the mitochondrion outer membrane. The protein localises to the secreted. It localises to the cell wall. Its function is as follows. Involved in aging, oxidative stress response, and in the regulation of mitochondrial biogenesis. Inactivation of UTH1 increases life span, leads to higher resistance to heat stress and against hydrogen peroxide, and increases sensitivity to the superoxide radical-generating drug paraquat and to copper. Also required for the selective autophagic degradation of mitochondria (mitophagy) in response to nitrogen starvation. Involved in the remodeling of the cell wall during the various phases of yeast culture development and under various environmental conditions and plays a role in septation. Involved in cell sensitivity to boric acid. In Saccharomyces cerevisiae (strain ATCC 204508 / S288c) (Baker's yeast), this protein is Probable secreted beta-glucosidase UTH1 (UTH1).